The chain runs to 300 residues: Soluble inorganic pyrophosphatase 6, chloroplastic (300 aa).

A chloroplast-targeting transit peptide spans 1–66 (MAATRVLTAA…CSAIYNPQVK (66 aa)). Arg140 contributes to the diphosphate binding site. Residue Tyr142 is the Proton donor of the active site. The Mg(2+) site is built by Asp173, Asp178, and Asp210.

This sequence belongs to the PPase family. Mg(2+) serves as cofactor. As to expression, expressed in all tissues tested. Highest expression in flowers, leaves and roots. Lower levels of expression in siliques, stems, ovary, stigma and pollen.

The protein resides in the plastid. Its subcellular location is the chloroplast stroma. It catalyses the reaction diphosphate + H2O = 2 phosphate + H(+). With respect to regulation, inhibited by NaF. The protein is Soluble inorganic pyrophosphatase 6, chloroplastic of Arabidopsis thaliana (Mouse-ear cress).